Reading from the N-terminus, the 459-residue chain is Glycosyl hydrolase family 109 protein (459 aa).

Positions 1–31 (MHNIHRRHFLKAAGAVTAGLITANITASTHA) form a signal peptide, tat-type signal. NAD(+) contacts are provided by residues 64–65 (ER), Asp-86, 135–138 (WEWH), 155–156 (EV), and Asn-184. Substrate contacts are provided by residues Tyr-213, Arg-232, 244–247 (YPTH), and Tyr-326. Position 244 (Tyr-244) interacts with NAD(+).

This sequence belongs to the Gfo/Idh/MocA family. Glycosyl hydrolase 109 subfamily. The cofactor is NAD(+). Predicted to be exported by the Tat system. The position of the signal peptide cleavage has not been experimentally proven.

Glycosidase. This is Glycosyl hydrolase family 109 protein from Shewanella sp. (strain W3-18-1).